The following is a 402-amino-acid chain: Beta-peptidyl aminopeptidase BapA (402 aa).

A signal peptide spans 1–29 (MTSTQRLWSGALPLLTALIVSIAATASLA). The Nucleophile role is filled by serine 279. Residues serine 317 and glutamate 319 each act as proton donor/acceptor in the active site.

Belongs to the peptidase S58 family. Heterooctamer of 4 heterodimers ((alpha:beta)4); each heterodimer is composed of an alpha subunit and a beta subunit processed from the same precursor. Post-translationally, autoproteolytic processing to generate the alpha and beta subunit is required for self-activation and is proposed to use a similar mechanism as substrate cleavage.

The protein localises to the periplasm. The enzyme catalyses Cleaves N-terminal beta-homoamino acids from peptides composed of 2 to 6 amino acids.. Inhibited by AEBSF (4-(2-aminoethyl)benzenesulfonyl fluoride, Pefabloc SC), ampicillin and AMP(hyd) (ampillicin-derived penicilloic acid). Beta-aminopeptidase that can cleave synthetic beta-peptides which consist of backbone-elongated beta-amino acid residues that are not processed by common proteolytic enzymes. Can cleave the beta-peptides beta-homoVal-beta-homoAla-beta-homoLeu and beta-homoAla-beta-homoLeu. Requires a beta-amino acid at the N-terminus of peptide substrates and cleaves the peptide bond between the N-terminal beta-amino acid and the amino acid at the second position of tripeptidic substrates of the general structure H-betahXaa-Ile-betahTyr-OH according to the following preferences with regard to the side chain of the N-terminal beta-amino acid: aliphatic and aromatic &gt; OH-containing &gt; hydrogen, basic and polar. The chain is Beta-peptidyl aminopeptidase BapA from Sphingosinicella xenopeptidilytica.